We begin with the raw amino-acid sequence, 146 residues long: Hydroxyproline-rich systemin (146 aa).

Positions 1 to 24 (MISFFRAFFLIIIISFLIFVGAQA) are cleaved as a signal peptide. Positions 25 to 48 (RTLLGNYHDDEMLIELKLESGNYG) are excised as a propeptide. A disordered region spans residues 47 to 128 (YGRTPYKTPP…PPPPKPQDEQ (82 aa)). 4-hydroxyproline is present on residues Pro51, Pro55, Pro56, Pro57, Pro58, and Pro63. 6 O-linked (Ara...) hydroxyproline glycosylation sites follow: Pro51, Pro55, Pro56, Pro57, Pro58, and Pro63. The propeptide occupies 67–70 (EIVN). 4-hydroxyproline is present on residues Pro79, Pro80, and Pro82. O-linked (Ara...) hydroxyproline glycosylation is found at Pro79, Pro80, and Pro82. Positions 86 to 110 (PIIGQLTTITTTPHHDDTVAAPPVG) are excised as a propeptide. 4-hydroxyproline is present on residues Pro119, Pro120, Pro121, and Pro122. O-linked (Ara...) hydroxyproline glycosylation is found at Pro119, Pro120, Pro121, and Pro122. Positions 131 to 146 (IIITSSSSTLPLQASY) are excised as a propeptide.

Post-translationally, O-glycosylated; contains pentose side chains. As to expression, leaves.

It localises to the secreted. Activates a lipid-based signal transduction pathway in which linolenic acid is converted to jasmonic acid, a potent activator of defense gene transcription. Induces synthesis of proteinase inhibitors I and II in leaves when supplied through cut stems. In Solanum lycopersicum (Tomato), this protein is Hydroxyproline-rich systemin.